A 135-amino-acid chain; its full sequence is MTNAKTAKFAWNEENTQKAVSMYQQLINENGLDFANSDGLKEIAKAVGAASPVSVRSKLTSAKAYQKSDKPRKVGGGSSIRKAHYVRVIAKHAIDSGIIKDADDLASLESAKLETLDAVAQLLGVADEVKQAAGE.

The protein belongs to the T5likevirus A2 protein family. As to quaternary structure, interacts with A1 protein; the two proteins form heterooligomers.

Functionally, involved, together with A1 protein, in the second step transfer (SST) which allows the completion of viral DNA into the host cell. The polypeptide is Protein A2 (A2) (Escherichia phage T5 (Enterobacteria phage T5)).